The following is a 337-amino-acid chain: Diacylglycerol O-acyltransferase 2-like protein 6 (337 aa).

The next 2 helical transmembrane spans lie at 22–42 (IPVY…FLLF) and 102–122 (YIIA…NFAT).

The protein belongs to the diacylglycerol acyltransferase family. Expressed in all tissues tested except pancreas.

The protein localises to the endoplasmic reticulum membrane. It catalyses the reaction 1,2-di-(9Z-octadecenoyl)-sn-glycerol + (9Z)-octadecenoyl-CoA = 1,2,3-tri-(9Z-octadecenoyl)-glycerol + CoA. The enzyme catalyses 1-O-(9Z-octadecenyl)-glycerol + (9Z)-octadecenoyl-CoA = 1-O-(9Z-octadecyl)-3-(9Z-octadecenoyl)-glycerol + CoA. The catalysed reaction is 1-(9Z-octadecenoyl)-glycerol + (9Z)-octadecenoyl-CoA = 1,2-di-(9Z-octadecenoyl)-glycerol + CoA. Functionally, diglyceride acyltransferase that uses fatty acyl-CoA as substrate. Particularly active with oleate as a substrate. Has no wax synthase activity to produce wax esters. Able to use 1-monoalkylglycerol (1-MAkG) as an acyl acceptor for the synthesis of monoalkyl-monoacylglycerol (MAMAG). This chain is Diacylglycerol O-acyltransferase 2-like protein 6, found in Homo sapiens (Human).